We begin with the raw amino-acid sequence, 222 residues long: 2-amino-5-formylamino-6-ribosylaminopyrimidin-4(3H)-one 5'-monophosphate deformylase (222 aa).

Residues Glu-29, His-31, Asp-40, and His-108 each contribute to the Fe cation site.

The protein belongs to the creatininase superfamily. FAPy deformylase family. Homodimer. It depends on Fe(2+) as a cofactor. Zn(2+) is required as a cofactor.

The catalysed reaction is 2-amino-5-formylamino-6-(5-phospho-D-ribosylamino)pyrimidin-4(3H)-one + H2O = 2,5-diamino-6-(1-D-ribosylamino)pyrimidin-4(3H)-one 5'-phosphate + formate + H(+). Its pathway is cofactor biosynthesis; coenzyme F420 biosynthesis. It participates in cofactor biosynthesis; riboflavin biosynthesis. Its function is as follows. Catalyzes the hydrolysis of the formamide of 2-amino-5-formylamino-6-ribosylamino-4(3H)-pyrimidinone 5'-monophosphate (FAPy) to form 2,5-diamino-6-ribosylamino-4(3H)-pyrimidinone 5'-phosphate (APy). This Methanocaldococcus infernus (strain DSM 11812 / JCM 15783 / ME) protein is 2-amino-5-formylamino-6-ribosylaminopyrimidin-4(3H)-one 5'-monophosphate deformylase.